The primary structure comprises 104 residues: Vacuolar ATPase assembly integral membrane protein VMA21 (104 aa).

Residues 1–21 (MSNRVSTGKMAMAPQESVQPA) lie on the Cytoplasmic side of the membrane. A helical membrane pass occupies residues 22 to 42 (VLYKLVLFALLMAVVPIGTYF). The Lumenal segment spans residues 43–65 (STLNYLWDGASRCGFPSGLCSTT). The helical transmembrane segment at 66 to 86 (FAAISAIAAANLILVGYVVVA) threads the bilayer. Residues 87 to 104 (FREDAASRTGPLPEKKTS) are Cytoplasmic-facing. Residues 101 to 104 (KKTS) carry the Prevents secretion from ER motif.

This sequence belongs to the VMA21 family.

The protein resides in the endoplasmic reticulum membrane. The protein localises to the endoplasmic reticulum-Golgi intermediate compartment membrane. It is found in the cytoplasmic vesicle. It localises to the COPII-coated vesicle membrane. Required for the assembly of the V0 complex of the vacuolar ATPase (V-ATPase) in the endoplasmic reticulum. The chain is Vacuolar ATPase assembly integral membrane protein VMA21 from Cryptococcus neoformans var. neoformans serotype D (strain B-3501A) (Filobasidiella neoformans).